An 898-amino-acid chain; its full sequence is Chloride channel protein 2 (898 aa).

Ala-2 carries the N-acetylalanine modification. Residues 2 to 87 (AAAAAEEGME…RCHKFLVSRV (86 aa)) are Cytoplasmic-facing. The interval 16 to 34 (QYEQTLMYGRYTQDLGAFA) is essential for channel gating by both voltage and cell volume. Thr-20 is modified (phosphothreonine). The segment at 36–49 (EEAARIRLGGPEPW) is modulates channel gating by both voltage and cell volume. The next 2 helical transmembrane spans lie at 88–121 (GEDW…AQQW) and 130–155 (ILLQ…TQIL). A Selectivity filter part_1 motif is present at residues 161–165 (GSGIP). Position 162 (Ser-162) interacts with chloride. The segment at residues 164–171 (IPEMKTIL) is an intramembrane region (helical). A run of 2 helical transmembrane segments spans residues 180-198 (LTLK…ALGS) and 205-223 (EGPF…SKFL). A Selectivity filter part_2 motif is present at residues 203 to 207 (GKEGP). Intramembrane regions (helical) lie at residues 239–251 (MLAA…VGCC) and 255–263 (PIGGVLFSI). 5 consecutive transmembrane segments (helical) span residues 275–295 (YWRG…LAVW), 321–349 (LPAF…VQVM), 358–377 (FLMR…ISTL), 429–449 (ANVF…SALA), and 457–480 (GAFM…MAAW). Residues 457–461 (GAFMP) carry the Selectivity filter part_3 motif. Phe-459 contacts chloride. The segment at residues 497-511 (GGYAVVGAAALAGAV) is an intramembrane region (helical). Positions 512-513 (TH) form an intramembrane region, note=Loop between two helices. The helical intramembrane region spans 514–525 (TVSTAVIVFELT). The note=Loop between two helices intramembrane region spans 526–530 (GQIAH). Residues 531 to 548 (ILPVMIAVILANAVAQSL) traverse the membrane as a helical segment. Residues 549–898 (QPSLYDSIIR…SPSDSDDKCQ (350 aa)) are Cytoplasmic-facing. Tyr-553 lines the chloride pocket. The 59-residue stretch at 584-642 (MVRDVPHVALSCTFRDLRLALHRTKGRMLALVESPESMILLGSIERSQVVALLGAQLSP) folds into the CBS 1 domain. 2 disordered regions span residues 643 to 672 (ARRR…PEAS) and 686 to 717 (AARG…TGSA). A compositionally biased stretch (polar residues) spans 705-717 (VTRNLGESPTGSA). A phosphoserine mark is found at Ser-712 and Ser-758. Positions 790–850 (IDPAPFQLVE…GSVTAQGVKV (61 aa)) constitute a CBS 2 domain. The short motif at 812–813 (LL) is the Basolateral membrane sorting element. The interval 856-898 (SFRDSATSSSDTETTEVHALWGPHSRHGLPREGSPSDSDDKCQ) is disordered.

The protein belongs to the chloride channel (TC 2.A.49) family. ClC-2/CLCN2 subfamily. Homodimer. Interacts with auxiliary subunit HEPACAM. In terms of processing, phosphorylated. Activated by dephosphorylation. In terms of tissue distribution, ubiquitously expressed. Moderately expressed in aortic and coronary vascular smooth muscle cells and expressed at a low level in aortic endothelial cells. Expressed in the adrenal gland, predominantly in the zona glomerulosa. Expressed in white mater perivascular astrocytes and ependymal cells (at protein level).

The protein localises to the cell membrane. It localises to the basolateral cell membrane. The protein resides in the cell projection. Its subcellular location is the dendritic spine membrane. It is found in the axon. The enzyme catalyses chloride(in) = chloride(out). It catalyses the reaction thiocyanate(in) = thiocyanate(out). The catalysed reaction is bromide(in) = bromide(out). It carries out the reaction nitrate(in) = nitrate(out). The enzyme catalyses iodide(out) = iodide(in). With respect to regulation, common gate kinetics are down-regulated by intracellular ATP. Inhibited by AK-42, a derivative of meclofenamate. Inhibited by Cd(2+). Inhibited by Zn(2+) and PKC activation. Inhibited at acidic pH. CCLN2:HEPACAM channel conductance is up-regulated upon hypo-osmolarity. In terms of biological role, voltage-gated and osmosensitive chloride channel. Forms a homodimeric channel where each subunit has its own ion conduction pathway. Conducts double-barreled currents controlled by two types of gates, two fast glutamate gates that control each subunit independently and a slow common gate that opens and shuts off both subunits simultaneously. Displays inward rectification currents activated upon membrane hyperpolarization and extracellular hypotonicity. Contributes to chloride conductance involved in neuron excitability. In hippocampal neurons, generates a significant part of resting membrane conductance and provides an additional chloride efflux pathway to prevent chloride accumulation in dendrites upon GABA receptor activation. In glia, associates with the auxiliary subunit HEPACAM/GlialCAM at astrocytic processes and myelinated fiber tracts where it may regulate transcellular chloride flux buffering extracellular chloride and potassium concentrations. Regulates aldosterone production in adrenal glands. The opening of CLCN2 channels at hyperpolarized membrane potentials in the glomerulosa causes cell membrane depolarization, activation of voltage-gated calcium channels and increased expression of aldosterone synthase, the rate-limiting enzyme for aldosterone biosynthesis. Contributes to chloride conductance in retinal pigment epithelium involved in phagocytosis of shed photoreceptor outer segments and photoreceptor renewal. Conducts chloride currents at the basolateral membrane of epithelial cells with a role in chloride reabsorption rather than secretion. Permeable to small monovalent anions with chloride &gt; thiocyanate &gt; bromide &gt; nitrate &gt; iodide ion selectivity. This chain is Chloride channel protein 2, found in Homo sapiens (Human).